We begin with the raw amino-acid sequence, 214 residues long: Protein verrocchio (214 aa).

In terms of assembly, probably homomultimerizes. Component of the MTV complex, composed of moi/modigliani, tea and ver/verrocchio. Interacts with moi/modigliani and tea (via C-terminus); the interactions are direct and require fully intact moi/modigliani and ver/verrocchio. The MTV complex is recruited to telomeres by the HipHop-HOAP complex, consisting of HipHop, cav/HOAP and Su(var)205/HP1 to form the terminin telomere-capping complex. Interacts with cav/HOAP; the interaction is direct. Interacts with Su(var)205/HP1; the interaction is indirect and probably requires cav/HOAP or moi/modigliani. Probably interacts with peo (via N-terminus and UBC domain).

Its subcellular location is the nucleus. The protein localises to the chromosome. The protein resides in the telomere. Part of the MTV complex that associates with the HipHop-HOAP complex to form the terminin telomere-capping complex involved in telomere maintenance and prevention of telomere fusion. As part of the MTV complex binds single stranded DNA in a sequence-independent manner, protecting it from degradation. The sequence is that of Protein verrocchio from Drosophila melanogaster (Fruit fly).